The chain runs to 270 residues: Glucosamine-6-phosphate deaminase (270 aa).

The active-site Proton acceptor; for enolization step is the D72. D141 acts as the For ring-opening step in catalysis. Catalysis depends on H143, which acts as the Proton acceptor; for ring-opening step. Catalysis depends on E148, which acts as the For ring-opening step.

Belongs to the glucosamine/galactosamine-6-phosphate isomerase family. NagB subfamily.

The catalysed reaction is alpha-D-glucosamine 6-phosphate + H2O = beta-D-fructose 6-phosphate + NH4(+). It participates in amino-sugar metabolism; N-acetylneuraminate degradation; D-fructose 6-phosphate from N-acetylneuraminate: step 5/5. Allosterically activated by N-acetylglucosamine 6-phosphate (GlcNAc6P). Its function is as follows. Catalyzes the reversible isomerization-deamination of glucosamine 6-phosphate (GlcN6P) to form fructose 6-phosphate (Fru6P) and ammonium ion. This Bacteroides fragilis (strain ATCC 25285 / DSM 2151 / CCUG 4856 / JCM 11019 / LMG 10263 / NCTC 9343 / Onslow / VPI 2553 / EN-2) protein is Glucosamine-6-phosphate deaminase.